The following is a 347-amino-acid chain: Holliday junction branch migration complex subunit RuvB (347 aa).

The interval 1–183 (MTPPSRIVTP…FGIPIRLNFY (183 aa)) is large ATPase domain (RuvB-L). Residues Leu22, Arg23, Gly64, Lys67, Thr68, Thr69, 130 to 132 (EDF), Arg173, Tyr183, and Arg220 contribute to the ATP site. Thr68 provides a ligand contact to Mg(2+). The segment at 184 to 254 (TVEELEGIVS…IADHALSALE (71 aa)) is small ATPAse domain (RuvB-S). The interval 257–347 (AAGLDAMDRR…QFGLFGGDEE (91 aa)) is head domain (RuvB-H). Residues Arg293, Arg312, and Arg317 each coordinate DNA.

Belongs to the RuvB family. As to quaternary structure, homohexamer. Forms an RuvA(8)-RuvB(12)-Holliday junction (HJ) complex. HJ DNA is sandwiched between 2 RuvA tetramers; dsDNA enters through RuvA and exits via RuvB. An RuvB hexamer assembles on each DNA strand where it exits the tetramer. Each RuvB hexamer is contacted by two RuvA subunits (via domain III) on 2 adjacent RuvB subunits; this complex drives branch migration. In the full resolvosome a probable DNA-RuvA(4)-RuvB(12)-RuvC(2) complex forms which resolves the HJ.

The protein localises to the cytoplasm. It catalyses the reaction ATP + H2O = ADP + phosphate + H(+). The RuvA-RuvB-RuvC complex processes Holliday junction (HJ) DNA during genetic recombination and DNA repair, while the RuvA-RuvB complex plays an important role in the rescue of blocked DNA replication forks via replication fork reversal (RFR). RuvA specifically binds to HJ cruciform DNA, conferring on it an open structure. The RuvB hexamer acts as an ATP-dependent pump, pulling dsDNA into and through the RuvAB complex. RuvB forms 2 homohexamers on either side of HJ DNA bound by 1 or 2 RuvA tetramers; 4 subunits per hexamer contact DNA at a time. Coordinated motions by a converter formed by DNA-disengaged RuvB subunits stimulates ATP hydrolysis and nucleotide exchange. Immobilization of the converter enables RuvB to convert the ATP-contained energy into a lever motion, pulling 2 nucleotides of DNA out of the RuvA tetramer per ATP hydrolyzed, thus driving DNA branch migration. The RuvB motors rotate together with the DNA substrate, which together with the progressing nucleotide cycle form the mechanistic basis for DNA recombination by continuous HJ branch migration. Branch migration allows RuvC to scan DNA until it finds its consensus sequence, where it cleaves and resolves cruciform DNA. This Rhodopseudomonas palustris (strain BisA53) protein is Holliday junction branch migration complex subunit RuvB.